We begin with the raw amino-acid sequence, 361 residues long: Myb/SANT-like DNA-binding domain-containing protein 7 (361 aa).

The Myb-like domain occupies 11-70; sequence RWSRQETRTLLSILGEAEYIQRLQTVHHNADVYQAVSKRMQQEGFRRTERQCRSKFKVLK. Disordered stretches follow at residues 174–198 and 217–272; these read TSDL…SYSS and RLGV…ARRR. Composition is skewed to polar residues over residues 187-198 and 226-249; these read AGCSQGTPSYSS and PCTS…SSSR.

The chain is Myb/SANT-like DNA-binding domain-containing protein 7 from Homo sapiens (Human).